A 206-amino-acid chain; its full sequence is uncharacterized protein (206 aa).

Residues Arg-147–Arg-206 form a disordered region. A compositionally biased stretch (basic and acidic residues) spans Arg-159 to Gly-173. The segment covering Gln-187–Arg-206 has biased composition (basic residues).

This is an uncharacterized protein from Schizosaccharomyces pombe (strain 972 / ATCC 24843) (Fission yeast).